The chain runs to 255 residues: 3-deoxy-manno-octulosonate cytidylyltransferase (255 aa).

This sequence belongs to the KdsB family.

The protein resides in the cytoplasm. It carries out the reaction 3-deoxy-alpha-D-manno-oct-2-ulosonate + CTP = CMP-3-deoxy-beta-D-manno-octulosonate + diphosphate. Its pathway is nucleotide-sugar biosynthesis; CMP-3-deoxy-D-manno-octulosonate biosynthesis; CMP-3-deoxy-D-manno-octulosonate from 3-deoxy-D-manno-octulosonate and CTP: step 1/1. The protein operates within bacterial outer membrane biogenesis; lipopolysaccharide biosynthesis. In terms of biological role, activates KDO (a required 8-carbon sugar) for incorporation into bacterial lipopolysaccharide in Gram-negative bacteria. The polypeptide is 3-deoxy-manno-octulosonate cytidylyltransferase (Glaesserella parasuis serovar 5 (strain SH0165) (Haemophilus parasuis)).